We begin with the raw amino-acid sequence, 194 residues long: CASP-like protein Ni6 (194 aa).

Residues Met1–Arg27 are Cytoplasmic-facing. The helical transmembrane segment at Val28 to Met48 threads the bilayer. Residues Val49–Ala75 lie on the Extracellular side of the membrane. A helical transmembrane segment spans residues Phe76 to Val96. The Cytoplasmic segment spans residues Ser97–Lys109. A helical membrane pass occupies residues Leu110–Gly130. Over Thr131 to His161 the chain is Extracellular. The chain crosses the membrane as a helical span at residues Val162–Val182. The Cytoplasmic segment spans residues Asn183–Tyr194.

This sequence belongs to the Casparian strip membrane proteins (CASP) family. In terms of assembly, homodimer and heterodimers.

It localises to the cell membrane. In Beta vulgaris subsp. maritima (Sea beet), this protein is CASP-like protein Ni6 (Ni6).